The chain runs to 200 residues: High mobility group protein B3 (200 aa).

At Lys-3 the chain carries N6-acetyllysine. 2 DNA-binding regions (HMG box) span residues 9–79 and 93–161; these read PKGK…KDYG and PKRP…ADYK. At Cys-23 the chain carries Cysteine sulfonic acid (-SO3H); alternate. Cysteines 23 and 45 form a disulfide. N6-acetyllysine is present on residues Lys-30 and Lys-43. Position 45 is a cysteine sulfonic acid (-SO3H); alternate (Cys-45). The segment at 71 to 97 is disordered; it reads YDREMKDYGPAKGGKKKKDPNAPKRPP. Ser-98 bears the Phosphoserine mark. Cys-104 is subject to Cysteine sulfonic acid (-SO3H). 2 positions are modified to N6-acetyllysine: Lys-112 and Lys-139. Positions 161–200 are disordered; it reads KSKGKFDGAKGPAKVARKKVEEEEEEEEEEEEEEEEEEDE. Residues 182–200 are compositionally biased toward acidic residues; it reads EEEEEEEEEEEEEEEEEDE.

The protein belongs to the HMGB family. In terms of processing, reduction/oxidation of cysteine residues Cys-23, Cys-45 and Cys-104 and a possible intramolecular disulfide bond involving Cys-23 and Cys-45 give rise to different redox forms with specific functional activities in various cellular compartments: 1- fully reduced HMGB3 (HMGB3C23hC45hC104h), 2- disulfide HMGB3 (HMGB3C23-C45C104h) and 3- sulfonyl HMGB3 (HMGB3C23soC45soC104so). As to expression, expressed in bone marrow cells, specifically in primitive Lin-, c-kit+, Sca-1+, IL-7Ralpha- cells, and Ter119+ erythroid cells.

It is found in the nucleus. The protein localises to the chromosome. It localises to the cytoplasm. Multifunctional protein with various roles in different cellular compartments. May act in a redox sensitive manner. Associates with chromatin and binds DNA with a preference for non-canonical DNA structures such as single-stranded DNA. Can bend DNA and enhance DNA flexibility by looping thus providing a mechanism to promote activities on various gene promoters. Proposed to be involved in the innate immune response to nucleic acids by acting as a cytoplasmic promiscuous immunogenic DNA/RNA sensor. Negatively regulates B-cell and myeloid cell differentiation. In hematopoietic stem cells may regulate the balance between self-renewal and differentiation. Involved in negative regulation of canonical Wnt signaling. In Mus musculus (Mouse), this protein is High mobility group protein B3 (Hmgb3).